We begin with the raw amino-acid sequence, 423 residues long: MKAEIIAVGTELLTGQVLNTNAQFLSEKMAEIGVDVFFQTAVGDNESRLLNLLDIASQRSDLILLCGGLGPTEDDLTKQTVASFLGKSLVFEPSASQKLDHFFASRPHYSRTPNNERQAQIIEGSTPIPNITGLAVGGILEVDGVTYVLLPGPPSELKPMVNQYLLPALSGNHTALYSRVLRFFGIGESQLVTILSEMIHKQSDPTIAPYAKIGEVTLRLSTKAETPEQAKAKLDGLEQKILQTPSFEGGLLADYHYGYGETNSLSAEVVNMLKERSMTITAAESLTAGLFQSTIADFPGSSKLFRGGFVTYHIEEKAKMLQLQLSDLELHGVVSAFTAKKMAEQSRHLTASDIGVGLTGVAGPDALEGHNVGTVFIGIATLKGAKSYKVSIGGRSRSDIRYIACLHAFDLVRKTLLNGLNLL.

This sequence belongs to the CinA family.

The polypeptide is Putative competence-damage inducible protein (Streptococcus uberis (strain ATCC BAA-854 / 0140J)).